The primary structure comprises 667 residues: DNA ligase (667 aa).

NAD(+) contacts are provided by residues 32–36 (DKDYD) and 80–81 (SL). Residue Lys121 is the N6-AMP-lysine intermediate of the active site. 3 residues coordinate NAD(+): Arg143, Glu178, and Lys314. Positions 407, 410, 423, and 429 each coordinate Zn(2+). The 81-residue stretch at 587 to 667 (IVESIFKDKT…EFEKMLGRES (81 aa)) folds into the BRCT domain.

It belongs to the NAD-dependent DNA ligase family. LigA subfamily. It depends on Mg(2+) as a cofactor. Requires Mn(2+) as cofactor.

It carries out the reaction NAD(+) + (deoxyribonucleotide)n-3'-hydroxyl + 5'-phospho-(deoxyribonucleotide)m = (deoxyribonucleotide)n+m + AMP + beta-nicotinamide D-nucleotide.. DNA ligase that catalyzes the formation of phosphodiester linkages between 5'-phosphoryl and 3'-hydroxyl groups in double-stranded DNA using NAD as a coenzyme and as the energy source for the reaction. It is essential for DNA replication and repair of damaged DNA. The sequence is that of DNA ligase from Clostridium botulinum (strain Eklund 17B / Type B).